Here is a 434-residue protein sequence, read N- to C-terminus: Eukaryotic translation initiation factor 3 subunit E-2 (434 aa).

The 174-residue stretch at 219-392 (FFNHPKGRDL…GHVVMGTQPL (174 aa)) folds into the PCI domain.

The protein belongs to the eIF-3 subunit E family. Component of the eukaryotic translation initiation factor 3 (eIF-3) complex. The eIF-3 complex interacts with pix. Interacts with mxt.

Its subcellular location is the cytoplasm. Its function is as follows. Component of the eukaryotic translation initiation factor 3 (eIF-3) complex, which is involved in protein synthesis of a specialized repertoire of mRNAs and, together with other initiation factors, stimulates binding of mRNA and methionyl-tRNAi to the 40S ribosome. The eIF-3 complex specifically targets and initiates translation of a subset of mRNAs involved in cell proliferation. In Drosophila willistoni (Fruit fly), this protein is Eukaryotic translation initiation factor 3 subunit E-2 (eIF3-S6-2).